The chain runs to 506 residues: Maturase K (506 aa).

This sequence belongs to the intron maturase 2 family. MatK subfamily.

The protein localises to the plastid. It is found in the chloroplast. In terms of biological role, usually encoded in the trnK tRNA gene intron. Probably assists in splicing its own and other chloroplast group II introns. This Lactuca sativa (Garden lettuce) protein is Maturase K.